Reading from the N-terminus, the 334-residue chain is Large ribosomal subunit protein uL3 (334 aa).

The segment covering 1-10 (MGMKKNRPRR) has biased composition (basic residues). The segment at 1–21 (MGMKKNRPRRGSLAFSPRKRA) is disordered.

This sequence belongs to the universal ribosomal protein uL3 family. In terms of assembly, part of the 50S ribosomal subunit. Forms a cluster with proteins L14 and L24e.

One of the primary rRNA binding proteins, it binds directly near the 3'-end of the 23S rRNA, where it nucleates assembly of the 50S subunit. This Methanococcus vannielii (strain ATCC 35089 / DSM 1224 / JCM 13029 / OCM 148 / SB) protein is Large ribosomal subunit protein uL3.